A 142-amino-acid chain; its full sequence is Large ribosomal subunit protein uL16 (142 aa).

Belongs to the universal ribosomal protein uL16 family. As to quaternary structure, part of the 50S ribosomal subunit.

Binds 23S rRNA and is also seen to make contacts with the A and possibly P site tRNAs. This Thermosipho africanus (strain TCF52B) protein is Large ribosomal subunit protein uL16.